The following is a 310-amino-acid chain: Ribosomal RNA small subunit methyltransferase H (310 aa).

S-adenosyl-L-methionine is bound by residues 32 to 34 (GGH), Asp52, Phe79, Asp100, and Gln107.

This sequence belongs to the methyltransferase superfamily. RsmH family.

Its subcellular location is the cytoplasm. It carries out the reaction cytidine(1402) in 16S rRNA + S-adenosyl-L-methionine = N(4)-methylcytidine(1402) in 16S rRNA + S-adenosyl-L-homocysteine + H(+). Its function is as follows. Specifically methylates the N4 position of cytidine in position 1402 (C1402) of 16S rRNA. The protein is Ribosomal RNA small subunit methyltransferase H of Bacillus thuringiensis subsp. konkukian (strain 97-27).